The sequence spans 218 residues: Chymotrypsin-2 (218 aa).

The Peptidase S1 domain occupies 1-218 (IVGGTDAPRG…FLDWIQKNQL (218 aa)). Cys25 and Cys40 are disulfide-bonded. Active-site charge relay system residues include His39 and Asp84. 2 disulfides stabilise this stretch: Cys148–Cys161 and Cys171–Cys195. Ser175 (charge relay system) is an active-site residue.

Belongs to the peptidase S1 family.

Its subcellular location is the secreted. The protein localises to the extracellular space. It catalyses the reaction Preferential cleavage: Tyr-|-Xaa, Trp-|-Xaa, Phe-|-Xaa, Leu-|-Xaa.. The protein is Chymotrypsin-2 of Vespa crabro (European hornet).